Here is a 118-residue protein sequence, read N- to C-terminus: DNA-binding protein Msm_0708 (118 aa).

The tract at residues 16 to 39 (EARQAAAQGQMQQQAQQQMQQQEA) is disordered. Positions 18 to 39 (RQAAAQGQMQQQAQQQMQQQEA) are enriched in low complexity.

It belongs to the PDCD5 family.

This chain is DNA-binding protein Msm_0708, found in Methanobrevibacter smithii (strain ATCC 35061 / DSM 861 / OCM 144 / PS).